The primary structure comprises 304 residues: ATP phosphoribosyltransferase (304 aa).

The protein belongs to the ATP phosphoribosyltransferase family. Long subfamily. Mg(2+) is required as a cofactor.

It localises to the cytoplasm. The enzyme catalyses 1-(5-phospho-beta-D-ribosyl)-ATP + diphosphate = 5-phospho-alpha-D-ribose 1-diphosphate + ATP. It functions in the pathway amino-acid biosynthesis; L-histidine biosynthesis; L-histidine from 5-phospho-alpha-D-ribose 1-diphosphate: step 1/9. Its activity is regulated as follows. Feedback inhibited by histidine. Its function is as follows. Catalyzes the condensation of ATP and 5-phosphoribose 1-diphosphate to form N'-(5'-phosphoribosyl)-ATP (PR-ATP). Has a crucial role in the pathway because the rate of histidine biosynthesis seems to be controlled primarily by regulation of HisG enzymatic activity. The chain is ATP phosphoribosyltransferase from Xanthomonas campestris pv. campestris (strain B100).